Reading from the N-terminus, the 508-residue chain is MLWFQGAIPAAIASAKRSGAVFVVFVAGDDEQSTQMAASWEDEKVTEASSNSFVAIKIDTRSEACLQFSQIYPVVCVPSSFFIGDSGIPLEVIAGSISADELVTRIHKVRQMHSLKGEASLANGSQSEGSVSTPSASFEHNNTSENCQSRNVELCETPSTSDTKSDSATGGESSGQTTVSQEPSGCSNQRPTEDLTVRVERLTKKLEERREEKRKEEEQREIKKEIERRKTGKEMLDYKRKQEEELTKRMLEERNREKAEDRAARERIKQQIALDRAERAARFAKTKEEVEAAKAAALLAKQAEMEIKRETSTKERSTVARIQFRLPDGSSFTNQFPSDAPLEEARQFAAQTVGNTYGNFSLATMFPRREFTKEDYKKKLLDLELAPSASVVLLPAGRPTTSMVHSSSGDFWTLLGTVLYPFLAIWRLISNFLFSNPPPAQTSVRAASLETSNLASSSNSEKREPVRKRVLEKRGEDFKKEGKIYRLRTQDDGEDENNTWNGNSTQQM.

The interaction with UBQLN1 stretch occupies residues methionine 1–glutamate 200. Residues methionine 1 to threonine 413 lie on the Cytoplasmic side of the membrane. Residues glycine 117 to valine 199 form a disordered region. Polar residues predominate over residues alanine 122 to arginine 190. The region spanning glutamate 315–leucine 393 is the UBX domain. Residues leucine 414–phenylalanine 434 lie within the membrane without spanning it. Residues serine 435 to methionine 508 are Cytoplasmic-facing. Over residues glutamate 450–asparagine 459 the composition is skewed to polar residues. The segment at glutamate 450–methionine 508 is disordered. Basic and acidic residues predominate over residues serine 460–aspartate 491. Threonine 489 carries the post-translational modification Phosphothreonine. The segment covering asparagine 498–methionine 508 has biased composition (polar residues).

In terms of assembly, directly interacts with VCP. Interacts with UBQLN1. Forms a complex with VCP and UBQLN1.

It localises to the endoplasmic reticulum membrane. The protein resides in the nucleus envelope. In terms of biological role, involved in endoplasmic reticulum-associated protein degradation (ERAD). Acts as a platform to recruit both UBQLN1 and VCP to the ER during ERAD. The sequence is that of UBX domain-containing protein 4 (UBXN4) from Bos taurus (Bovine).